Reading from the N-terminus, the 496-residue chain is Cobyric acid synthase (496 aa).

Positions 255–445 (DLEIAVLKLP…LHGLLDNGPW (191 aa)) constitute a GATase cobBQ-type domain. Residue Cys-336 is the Nucleophile of the active site. His-437 is a catalytic residue.

This sequence belongs to the CobB/CobQ family. CobQ subfamily.

It participates in cofactor biosynthesis; adenosylcobalamin biosynthesis. Catalyzes amidations at positions B, D, E, and G on adenosylcobyrinic A,C-diamide. NH(2) groups are provided by glutamine, and one molecule of ATP is hydrogenolyzed for each amidation. The polypeptide is Cobyric acid synthase (Parasynechococcus marenigrum (strain WH8102)).